A 219-amino-acid chain; its full sequence is MTLNIILLGPPGAGKGTQASRLEDEHGMVQLSTGDMLRAAVKAGTPIGLQAKAVMDAGELVSDAIVSGLIGERLDELGPDVSVIFDGYPRTAAQADALDGILSARGRTLDHVIELVVDEDALVDRITGRFSCARCGEGYHDRYKLPKVADICDVCGSKEFKRRPDDNEDTVRTRMVEYRAKTAPILPIYEARGIVTRVDGMAPIDRVNDAIETILGTAG.

12-17 contacts ATP; sequence GAGKGT. The segment at 32-61 is NMP; the sequence is STGDMLRAAVKAGTPIGLQAKAVMDAGELV. AMP-binding positions include Thr-33, Arg-38, 59–61, 87–90, and Gln-94; these read ELV and GYPR. Residues 128 to 165 form an LID region; that stretch reads GRFSCARCGEGYHDRYKLPKVADICDVCGSKEFKRRPD. Residue Arg-129 participates in ATP binding. Positions 132, 135, 152, and 155 each coordinate Zn(2+). Residues Arg-162 and Arg-174 each contribute to the AMP site. Ala-202 provides a ligand contact to ATP.

This sequence belongs to the adenylate kinase family. Monomer.

It is found in the cytoplasm. It catalyses the reaction AMP + ATP = 2 ADP. It functions in the pathway purine metabolism; AMP biosynthesis via salvage pathway; AMP from ADP: step 1/1. Functionally, catalyzes the reversible transfer of the terminal phosphate group between ATP and AMP. Plays an important role in cellular energy homeostasis and in adenine nucleotide metabolism. The protein is Adenylate kinase of Sphingopyxis alaskensis (strain DSM 13593 / LMG 18877 / RB2256) (Sphingomonas alaskensis).